Reading from the N-terminus, the 201-residue chain is ADP-ribosylation factor-related protein 1 (201 aa).

An N-acetylmethionine modification is found at M1. GTP is bound by residues 24–31, 75–79, and 134–137; these read GLDNAGKT, DLGGQ, and NKQD.

It belongs to the small GTPase superfamily. Arf family. Interacts with SYS1.

It localises to the golgi apparatus. The protein localises to the trans-Golgi network. Its function is as follows. Trans-Golgi-associated GTPase that regulates protein sorting. Controls the targeting of ARL1 and its effector to the trans-Golgi. Required for the lipidation of chylomicrons in the intestine and required for VLDL lipidation in the liver. The protein is ADP-ribosylation factor-related protein 1 (ARFRP1) of Bos taurus (Bovine).